The chain runs to 445 residues: UDP-N-acetylmuramoylalanine--D-glutamate ligase (445 aa).

117–123 (GSNGKTT) contacts ATP.

It belongs to the MurCDEF family.

It localises to the cytoplasm. It catalyses the reaction UDP-N-acetyl-alpha-D-muramoyl-L-alanine + D-glutamate + ATP = UDP-N-acetyl-alpha-D-muramoyl-L-alanyl-D-glutamate + ADP + phosphate + H(+). The protein operates within cell wall biogenesis; peptidoglycan biosynthesis. Its function is as follows. Cell wall formation. Catalyzes the addition of glutamate to the nucleotide precursor UDP-N-acetylmuramoyl-L-alanine (UMA). The sequence is that of UDP-N-acetylmuramoylalanine--D-glutamate ligase from Neisseria gonorrhoeae (strain NCCP11945).